We begin with the raw amino-acid sequence, 1008 residues long: Translation initiation factor IF-2 (1008 aa).

Disordered regions lie at residues 113–136 (AVTA…KGNV), 153–235 (DKDS…PAAP), and 253–405 (GLTV…YRKD). Basic and acidic residues-rich tracts occupy residues 153-180 (DKDS…KAKP) and 189-213 (PKPE…KAET). Composition is skewed to low complexity over residues 294-329 (GPNK…PRPQ) and 342-358 (GGPN…SNGP). Basic and acidic residues predominate over residues 365-381 (ASEKGEVTGKQIQDKIK). Positions 507-677 (DRAPIVTIMG…LLEAEMLELK (171 aa)) constitute a tr-type G domain. Residues 516-523 (GHVDHGKT) are G1. Residue 516–523 (GHVDHGKT) participates in GTP binding. The segment at 541-545 (GITQH) is G2. Residues 563–566 (DTPG) form a G3 region. Residues 563-567 (DTPGH) and 617-620 (NKID) each bind GTP. Residues 617–620 (NKID) are G4. Residues 653 to 655 (SAK) form a G5 region.

The protein belongs to the TRAFAC class translation factor GTPase superfamily. Classic translation factor GTPase family. IF-2 subfamily.

The protein localises to the cytoplasm. One of the essential components for the initiation of protein synthesis. Protects formylmethionyl-tRNA from spontaneous hydrolysis and promotes its binding to the 30S ribosomal subunits. Also involved in the hydrolysis of GTP during the formation of the 70S ribosomal complex. The chain is Translation initiation factor IF-2 from Cytophaga hutchinsonii (strain ATCC 33406 / DSM 1761 / CIP 103989 / NBRC 15051 / NCIMB 9469 / D465).